We begin with the raw amino-acid sequence, 304 residues long: uncharacterized protein (304 aa).

2 coiled-coil regions span residues 3 to 35 (KNQY…DKEI) and 89 to 132 (KSNK…NSNL). The segment at 96–121 (LQNKQQENSEEKNSEEKNSEEKNSEE) is disordered.

This is an uncharacterized protein from Acanthamoeba polyphaga (Amoeba).